Consider the following 113-residue polypeptide: Putative pterin-4-alpha-carbinolamine dehydratase (113 aa).

The protein belongs to the pterin-4-alpha-carbinolamine dehydratase family.

The enzyme catalyses (4aS,6R)-4a-hydroxy-L-erythro-5,6,7,8-tetrahydrobiopterin = (6R)-L-erythro-6,7-dihydrobiopterin + H2O. This is Putative pterin-4-alpha-carbinolamine dehydratase from Idiomarina loihiensis (strain ATCC BAA-735 / DSM 15497 / L2-TR).